The chain runs to 346 residues: Phosphoribosylformylglycinamidine cyclo-ligase (346 aa).

Belongs to the AIR synthase family.

Its subcellular location is the cytoplasm. The catalysed reaction is 2-formamido-N(1)-(5-O-phospho-beta-D-ribosyl)acetamidine + ATP = 5-amino-1-(5-phospho-beta-D-ribosyl)imidazole + ADP + phosphate + H(+). It functions in the pathway purine metabolism; IMP biosynthesis via de novo pathway; 5-amino-1-(5-phospho-D-ribosyl)imidazole from N(2)-formyl-N(1)-(5-phospho-D-ribosyl)glycinamide: step 2/2. This is Phosphoribosylformylglycinamidine cyclo-ligase from Prochlorococcus marinus (strain NATL2A).